A 390-amino-acid chain; its full sequence is GTPase Obg (390 aa).

The 159-residue stretch at 1–159 (MKFIDESLIR…RDLLLELMLL (159 aa)) folds into the Obg domain. Positions 160–333 (ADVGMLGLPN…LCRDIMDFII (174 aa)) constitute an OBG-type G domain. GTP is bound by residues 166–173 (GLPNAGKS), 191–195 (FTTLV), 213–216 (DIPG), 283–286 (NKID), and 314–316 (SAA). 2 residues coordinate Mg(2+): S173 and T193. The disordered stretch occupies residues 363 to 382 (EHQFDDDEDWDDDWSEEDDE). The span at 366 to 382 (FDDDEDWDDDWSEEDDE) shows a compositional bias: acidic residues.

It belongs to the TRAFAC class OBG-HflX-like GTPase superfamily. OBG GTPase family. Monomer. The cofactor is Mg(2+).

It is found in the cytoplasm. In terms of biological role, an essential GTPase which binds GTP, GDP and possibly (p)ppGpp with moderate affinity, with high nucleotide exchange rates and a fairly low GTP hydrolysis rate. Plays a role in control of the cell cycle, stress response, ribosome biogenesis and in those bacteria that undergo differentiation, in morphogenesis control. The polypeptide is GTPase Obg (Haemophilus influenzae (strain ATCC 51907 / DSM 11121 / KW20 / Rd)).